The chain runs to 672 residues: tRNA 5-methylaminomethyl-2-thiouridine biosynthesis bifunctional protein MnmC (672 aa).

The segment at 1–243 (MTSITHAELG…KREMIAGCME (243 aa)) is tRNA (mnm(5)s(2)U34)-methyltransferase. Positions 269–672 (IGGGIASAAL…LRKGKAITEL (404 aa)) are FAD-dependent cmnm(5)s(2)U34 oxidoreductase.

In the N-terminal section; belongs to the methyltransferase superfamily. tRNA (mnm(5)s(2)U34)-methyltransferase family. It in the C-terminal section; belongs to the DAO family. The cofactor is FAD.

Its subcellular location is the cytoplasm. It carries out the reaction 5-aminomethyl-2-thiouridine(34) in tRNA + S-adenosyl-L-methionine = 5-methylaminomethyl-2-thiouridine(34) in tRNA + S-adenosyl-L-homocysteine + H(+). Functionally, catalyzes the last two steps in the biosynthesis of 5-methylaminomethyl-2-thiouridine (mnm(5)s(2)U) at the wobble position (U34) in tRNA. Catalyzes the FAD-dependent demodification of cmnm(5)s(2)U34 to nm(5)s(2)U34, followed by the transfer of a methyl group from S-adenosyl-L-methionine to nm(5)s(2)U34, to form mnm(5)s(2)U34. The sequence is that of tRNA 5-methylaminomethyl-2-thiouridine biosynthesis bifunctional protein MnmC from Vibrio vulnificus (strain CMCP6).